We begin with the raw amino-acid sequence, 130 residues long: Small ribosomal subunit protein uS9 (130 aa).

Belongs to the universal ribosomal protein uS9 family.

The protein is Small ribosomal subunit protein uS9 of Vibrio cholerae serotype O1 (strain ATCC 39541 / Classical Ogawa 395 / O395).